We begin with the raw amino-acid sequence, 107 residues long: Phosphoribosyl-ATP pyrophosphatase (107 aa).

Belongs to the PRA-PH family.

It localises to the cytoplasm. The catalysed reaction is 1-(5-phospho-beta-D-ribosyl)-ATP + H2O = 1-(5-phospho-beta-D-ribosyl)-5'-AMP + diphosphate + H(+). Its pathway is amino-acid biosynthesis; L-histidine biosynthesis; L-histidine from 5-phospho-alpha-D-ribose 1-diphosphate: step 2/9. The sequence is that of Phosphoribosyl-ATP pyrophosphatase from Bacillus cereus (strain AH187).